We begin with the raw amino-acid sequence, 305 residues long: Oxygen-dependent coproporphyrinogen-III oxidase (305 aa).

Ser92 is a substrate binding site. The a divalent metal cation site is built by His96 and His106. His106 functions as the Proton donor in the catalytic mechanism. 108 to 110 serves as a coordination point for substrate; it reads NVR. A divalent metal cation is bound by residues His145 and His175. Positions 239 to 274 are important for dimerization; it reads YVEFNLLFDRGTLFGLQSGGRAESILISLPPLVRWE. 257–259 is a binding site for substrate; it reads GGR.

Belongs to the aerobic coproporphyrinogen-III oxidase family. Homodimer. A divalent metal cation serves as cofactor.

It is found in the cytoplasm. It carries out the reaction coproporphyrinogen III + O2 + 2 H(+) = protoporphyrinogen IX + 2 CO2 + 2 H2O. It participates in porphyrin-containing compound metabolism; protoporphyrin-IX biosynthesis; protoporphyrinogen-IX from coproporphyrinogen-III (O2 route): step 1/1. Functionally, involved in the heme biosynthesis. Catalyzes the aerobic oxidative decarboxylation of propionate groups of rings A and B of coproporphyrinogen-III to yield the vinyl groups in protoporphyrinogen-IX. The polypeptide is Oxygen-dependent coproporphyrinogen-III oxidase (Xylella fastidiosa (strain M12)).